The primary structure comprises 343 residues: N(4)-bis(aminopropyl)spermidine synthase (343 aa).

Belongs to the branched-chain polyamine synthase family.

It localises to the cytoplasm. The catalysed reaction is 2 S-adenosyl 3-(methylsulfanyl)propylamine + spermidine = N(4)-bis(aminopropyl)spermidine + 2 S-methyl-5'-thioadenosine + 2 H(+). The protein operates within amine and polyamine biosynthesis. Its function is as follows. Involved in the biosynthesis of branched-chain polyamines, which support the growth of thermophiles under high-temperature conditions. Catalyzes the sequential condensation of spermidine with the aminopropyl groups of decarboxylated S-adenosylmethionines to produce N(4)-bis(aminopropyl)spermidine via N(4)-aminopropylspermidine. The protein is N(4)-bis(aminopropyl)spermidine synthase of Thermus thermophilus.